We begin with the raw amino-acid sequence, 577 residues long: Insulin-like growth factor 2 mRNA-binding protein 1 (577 aa).

2 RRM domains span residues 2–75 and 81–156; these read NKLY…HSVP and RKIQ…YIPD. Serine 12 and serine 73 each carry phosphoserine. The interval 156 to 190 is disordered; that stretch reads DEQITQGPENGRRGGFGSRGQPRQGSPVAAGAPAK. A Phosphoserine; by MTOR modification is found at serine 181. 4 KH domains span residues 195-260, 276-343, 405-470, and 487-553; these read DIPL…CKMI, EVPL…EQEI, QEMV…QGRI, and KLET…QRKI. Residues 312–323 form a sufficient for nuclear export region; that stretch reads ISSLQDLTLYNP. Residues 485-495 form a sufficient for nuclear export region; sequence EVKLETHIRVP. Threonine 528 carries the post-translational modification Phosphothreonine.

Belongs to the RRM IMP/VICKZ family. As to quaternary structure, can form homodimers and heterodimers with IGF2BP1 and IGF2BP3. Component of the coding region determinant (CRD)-mediated complex, composed of DHX9, HNRNPU, IGF2BP1, SYNCRIP and YBX1. Identified in a mRNP complex, at least composed of DHX9, DDX3X, ELAVL1, HNRNPU, IGF2BP1, ILF3, PABPC1, PCBP2, PTBP2, STAU1, STAU2, SYNCRIP and YBX1. Associates with mRNP complex. Interacts with FMR1. Component of a multisubunit autoregulatory RNP complex (ARC), at least composed of IGF2BP1, PABPC1 and CSDE1. Interacts with AGO1 and AGO2. Interacts, through domains KH3 and KH4, with PABPC1 in an RNA-independent manner. Component of a TAU mRNP complex, at least composed of IGF2BP1, ELAVL4 and G3BP. Interacts with ELAVL4 in an RNA-dependent manner. Associates with microtubules and polysomes. Interacts with ELAVL1 and MATR3. Phosphorylated at Ser-181 by mTORC2 cotranslationally, promoting binding to the 3'-UTR of IGF2 mRNA. In terms of tissue distribution, expressed in zygotes and blastocysts (at protein level). Expressed in brain, skeletal muscle, trophoblasts of placenta, oocytes and spermatogonia (at protein level). Expressed in testis and ovary. Following colon injury, expressed in the wound bed mesenchyme during the first phase of repair, probably by colonic mesenchymal stem cells (at protein level).

The protein resides in the nucleus. It localises to the cytoplasm. Its subcellular location is the perinuclear region. It is found in the P-body. The protein localises to the stress granule. The protein resides in the cell projection. It localises to the lamellipodium. Its subcellular location is the dendrite. It is found in the dendritic spine. The protein localises to the growth cone. The protein resides in the filopodium. It localises to the axon. Its function is as follows. RNA-binding factor that recruits target transcripts to cytoplasmic protein-RNA complexes (mRNPs). This transcript 'caging' into mRNPs allows mRNA transport and transient storage. It also modulates the rate and location at which target transcripts encounter the translational apparatus and shields them from endonuclease attacks or microRNA-mediated degradation. Preferentially binds to N6-methyladenosine (m6A)-containing mRNAs and increases their stability. Regulates localized beta-actin/ACTB mRNA translation, a crucial process for cell polarity, cell migration and neurite outgrowth. Co-transcriptionally associates with the ACTB mRNA in the nucleus. This binding involves a conserved 54-nucleotide element in the ACTB mRNA 3'-UTR, known as the 'zipcode'. The RNP thus formed is exported to the cytoplasm, binds to a motor protein and is transported along the cytoskeleton to the cell periphery. During transport, prevents ACTB mRNA from being translated into protein. When the RNP complex reaches its destination near the plasma membrane, IGF2BP1 is phosphorylated. This releases the mRNA, allowing ribosomal 40S and 60S subunits to assemble and initiate ACTB protein synthesis. Monomeric ACTB then assembles into the subcortical actin cytoskeleton. During neuronal development, key regulator of neurite outgrowth, growth cone guidance and neuronal cell migration, presumably through the spatiotemporal fine tuning of protein synthesis, such as that of ACTB. May regulate mRNA transport to activated synapses. Binds to the 3'-UTR of CD44 mRNA and stabilizes it, hence promotes cell adhesion and invadopodia formation in cancer cells. Binds to the oncofetal H19 transcript and regulates its localization. Binds to and stabilizes BTRC/FBW1A mRNA. Binds to the adenine-rich autoregulatory sequence (ARS) located in PABPC1 mRNA and represses its translation. PABPC1 mRNA-binding is stimulated by PABPC1 protein. Prevents BTRC/FBW1A mRNA degradation by disrupting microRNA-dependent interaction with AGO2. During cellular stress, such as oxidative stress or heat shock, stabilizes target mRNAs that are recruited to stress granules, including CD44, IGF2, MAPK4, MYC, PTEN, RAPGEF2 and RPS6KA5 transcripts. Interacts with GAP43 transcript and transports it to axons. Binds to the 3'-UTR of IGF2 mRNA by a mechanism of cooperative and sequential dimerization and regulates IGF2 mRNA subcellular localization and translation. Binds to MYC mRNA, in the coding region instability determinant (CRD) of the open reading frame (ORF), hence prevents MYC cleavage by endonucleases and possibly microRNA targeting to MYC-CRD. Binding to MYC mRNA is enhanced by m6A-modification of the CRD. Binds to and stabilizes ABCB1/MDR-1 mRNA. Binds to the neuron-specific TAU mRNA and regulates its localization. Plays a direct role in the transport and translation of transcripts required for axonal regeneration in adult sensory neurons. During interstinal wound repair, interacts with and stabilizes PTGS2 transcript. PTGS2 mRNA stabilization may be crucial for colonic mucosal wound healing. In Mus musculus (Mouse), this protein is Insulin-like growth factor 2 mRNA-binding protein 1 (Igf2bp1).